We begin with the raw amino-acid sequence, 445 residues long: GTPase Der (445 aa).

EngA-type G domains lie at 3 to 166 (PVIA…AERV) and 180 to 353 (IRIG…ESCY). Residues 9 to 16 (GRPNVGKS), 56 to 60 (DTGGI), 118 to 121 (NKTD), 186 to 193 (GRPNVGKS), 233 to 237 (DTAGI), and 298 to 301 (NKWD) contribute to the GTP site. The region spanning 354-438 (AKWTTNRLTR…PIIFEFKSAE (85 aa)) is the KH-like domain.

This sequence belongs to the TRAFAC class TrmE-Era-EngA-EngB-Septin-like GTPase superfamily. EngA (Der) GTPase family. Associates with the 50S ribosomal subunit.

Functionally, GTPase that plays an essential role in the late steps of ribosome biogenesis. This is GTPase Der from Marinomonas sp. (strain MWYL1).